A 154-amino-acid polypeptide reads, in one-letter code: Cold shock domain-containing protein C2 (154 aa).

Phosphoserine is present on S19. A disordered region spans residues G38 to A62. The CSD domain occupies V69–T136.

The protein resides in the nucleus. It localises to the cytoplasm. Functionally, RNA-binding factor which binds specifically to the very 3'-UTR ends of both histone H1 and H3.3 mRNAs, encompassing the polyadenylation signal. Might play a central role in the negative regulation of histone variant synthesis in the developing brain. This Mus musculus (Mouse) protein is Cold shock domain-containing protein C2 (Csdc2).